The primary structure comprises 383 residues: Acetylornithine deacetylase (383 aa).

His-80 serves as a coordination point for Zn(2+). Asp-82 is an active-site residue. Residue Asp-112 participates in Zn(2+) binding. Residue Glu-144 is part of the active site. Glu-145, Glu-169, and His-355 together coordinate Zn(2+).

The protein belongs to the peptidase M20A family. ArgE subfamily. As to quaternary structure, homodimer. It depends on Zn(2+) as a cofactor. Requires Co(2+) as cofactor. The cofactor is glutathione.

It is found in the cytoplasm. The enzyme catalyses N(2)-acetyl-L-ornithine + H2O = L-ornithine + acetate. It functions in the pathway amino-acid biosynthesis; L-arginine biosynthesis; L-ornithine from N(2)-acetyl-L-ornithine (linear): step 1/1. Catalyzes the hydrolysis of the amide bond of N(2)-acetylated L-amino acids. Cleaves the acetyl group from N-acetyl-L-ornithine to form L-ornithine, an intermediate in L-arginine biosynthesis pathway, and a branchpoint in the synthesis of polyamines. The protein is Acetylornithine deacetylase of Escherichia coli O9:H4 (strain HS).